Here is an 855-residue protein sequence, read N- to C-terminus: DNA mismatch repair protein MutS (855 aa).

618 to 625 (GPNMGGKS) serves as a coordination point for ATP.

It belongs to the DNA mismatch repair MutS family.

Functionally, this protein is involved in the repair of mismatches in DNA. It is possible that it carries out the mismatch recognition step. This protein has a weak ATPase activity. The chain is DNA mismatch repair protein MutS from Shewanella loihica (strain ATCC BAA-1088 / PV-4).